Here is a 117-residue protein sequence, read N- to C-terminus: MSELASQQCEACRADAPKVSEQELSELMHLIPDWQPLVVKGELQLRREFTFRNFKEALAFTNRLGELAEAEFHHPAILTEWGKVTVSWWTHKIGGLHRNDFIMAARTDQLLSDPLHK.

This sequence belongs to the pterin-4-alpha-carbinolamine dehydratase family.

The catalysed reaction is (4aS,6R)-4a-hydroxy-L-erythro-5,6,7,8-tetrahydrobiopterin = (6R)-L-erythro-6,7-dihydrobiopterin + H2O. The sequence is that of Putative pterin-4-alpha-carbinolamine dehydratase from Aeromonas salmonicida (strain A449).